Consider the following 220-residue polypeptide: Aspartic protease inhibitor 2 (220 aa).

The signal sequence occupies residues 1 to 23 (MMKCLFLLCLCLLPIVVFSSTFT). A propeptide spanning residues 24 to 32 (SQNLIDLPS) is cleaved from the precursor. A Vacuolar targeting signal motif is present at residues 26–31 (NLIDLP). An N-linked (GlcNAc...) asparagine glycan is attached at N51. Intrachain disulfides connect C80-C125 and C174-C185.

Belongs to the protease inhibitor I3 (leguminous Kunitz-type inhibitor) family. In terms of tissue distribution, tubers.

The protein localises to the vacuole. Functionally, inhibitor of cathepsin D (aspartic protease). May also inhibit trypsin and chymotrypsin (serine proteases). Protects the plant by inhibiting proteases of invading organisms. In Solanum tuberosum (Potato), this protein is Aspartic protease inhibitor 2.